A 297-amino-acid polypeptide reads, in one-letter code: MDTLPPATSEESFEIPNADVAGSAVLETETSQDIHQLEIEKDAGETDSDAGSIAMNVHQLDTAGEPLQSMNEDEVDPNNESTALDKKEPQSAPEGSENLGNDLFVSGIASRMQEDELQQIFSKFGTVTHVRIMREPVTKASRGFGFLSFSTVEEATSAIDNLNSQEFYGRVLNVQKAKRSRPHSPTPGKYMGYDRRRNSRDFPSNNKDGGYRRNNYRDRDSNRYRNSYRPSRPQREHSPGNYRKERYNVDSRPRRERHFHGRSFAHAEHHSVPNMRNDTPGNEALPSHSSVPPNEDQ.

Disordered stretches follow at residues 1 to 20, 39 to 100, and 174 to 297; these read MDTLPPATSEESFEIPNADV, IEKD…ENLG, and VQKA…NEDQ. The region spanning 101–179 is the RRM domain; sequence NDLFVSGIAS…RVLNVQKAKR (79 aa). S184 carries the post-translational modification Phosphoserine. Basic and acidic residues-rich tracts occupy residues 209 to 223 and 233 to 253; these read GGYRRNNYRDRDSNR and PQREHSPGNYRKERYNVDSRP. Positions 254-263 are enriched in basic residues; it reads RRERHFHGRS. Polar residues predominate over residues 287-297; it reads SHSSVPPNEDQ.

Its subcellular location is the nucleus. This is an uncharacterized protein from Schizosaccharomyces pombe (strain 972 / ATCC 24843) (Fission yeast).